We begin with the raw amino-acid sequence, 505 residues long: Buccalin (505 aa).

Positions 1–25 (MAHHRGHRHILLYVSLALSLGLALA) are cleaved as a signal peptide. Positions 26–62 (EDATDPSDDTGSFDDVEAVSEEADLDPYSMSQELNKR) are excised as a propeptide. Valine amide is present on Val-74. Leu-88 and Leu-102 each carry leucine amide. At Gln-106 the chain carries Pyrrolidone carboxylic acid. Residue Ile-116 is modified to Isoleucine amide. Leucine amide occurs at positions 129, 143, 157, 171, 185, 199, 213, 227, 241, 254, 267, 281, 294, 307, 321, and 335. Glu-349 carries the post-translational modification Glutamic acid 1-amide. Residues Leu-363, Leu-377, Leu-391, Leu-405, Leu-419, and Leu-433 each carry the leucine amide modification. Residues Ile-447 and Ile-461 each carry the isoleucine amide modification. Position 465 is a pyrrolidone carboxylic acid (Gln-465). Residues 472 to 505 (SGRLGKRSSSEQEEEDVRQVEKRSTTEEQSSKSL) are disordered. At Leu-475 the chain carries Leucine amide. Basic and acidic residues predominate over residues 488-505 (VRQVEKRSTTEEQSSKSL). Residues 495 to 505 (STTEEQSSKSL) constitute a propeptide that is removed on maturation.

In terms of tissue distribution, cholinergic motor neuron B15 innervating buccal muscles in Aplysia.

Its subcellular location is the secreted. In terms of biological role, modulatory neuropeptide, acting presynaptically on nerve terminals to inhibit acetylcholine release. This chain is Buccalin, found in Aplysia californica (California sea hare).